A 334-amino-acid polypeptide reads, in one-letter code: Testis-specific Y-encoded protein 1 (334 aa).

A Phosphoserine modification is found at S4. Disordered regions lie at residues 27–46 and 96–146; these read LEGE…PAGD and NEGE…AERR. Composition is skewed to basic and acidic residues over residues 96 to 108 and 115 to 128; these read NEGE…KQEG and ELEK…DSKD.

It belongs to the nucleosome assembly protein (NAP) family. Post-translationally, phosphorylated. As to expression, testis.

The protein localises to the cytoplasm. It is found in the nucleus. Its function is as follows. May be involved in sperm differentiation and proliferation. This chain is Testis-specific Y-encoded protein 1 (Tspy1), found in Rattus norvegicus (Rat).